Consider the following 293-residue polypeptide: Fructose-bisphosphate aldolase class 1 (293 aa).

Catalysis depends on Glu-176, which acts as the Proton acceptor. Lys-211 serves as the catalytic Schiff-base intermediate with dihydroxyacetone-P.

Belongs to the class I fructose-bisphosphate aldolase family.

It catalyses the reaction beta-D-fructose 1,6-bisphosphate = D-glyceraldehyde 3-phosphate + dihydroxyacetone phosphate. It functions in the pathway carbohydrate degradation; glycolysis; D-glyceraldehyde 3-phosphate and glycerone phosphate from D-glucose: step 4/4. This is Fructose-bisphosphate aldolase class 1 from Porphyromonas gingivalis (strain ATCC 33277 / DSM 20709 / CIP 103683 / JCM 12257 / NCTC 11834 / 2561).